The primary structure comprises 123 residues: Large ribosomal subunit protein uL18 (123 aa).

It belongs to the universal ribosomal protein uL18 family. Part of the 50S ribosomal subunit; part of the 5S rRNA/L5/L18/L25 subcomplex. Contacts the 5S and 23S rRNAs.

This is one of the proteins that bind and probably mediate the attachment of the 5S RNA into the large ribosomal subunit, where it forms part of the central protuberance. In Protochlamydia amoebophila (strain UWE25), this protein is Large ribosomal subunit protein uL18.